A 448-amino-acid chain; its full sequence is 26S proteasome regulatory subunit 4 homolog (448 aa).

Positions 1-16 are enriched in gly residues; the sequence is MGQGTPGGMGKQGGAP. 2 disordered regions span residues 1–56 and 93–112; these read MGQG…AAAR and LRPTEDKTEEDRSKVDDLRG. 2 stretches are compositionally biased toward basic and acidic residues: residues 17-33 and 93-111; these read GDRKPGGDGDKKDRKFE and LRPTEDKTEEDRSKVDDLR. An ATP-binding site is contributed by 234 to 241; sequence GEPGTGKT.

This sequence belongs to the AAA ATPase family.

The protein localises to the cytoplasm. Its subcellular location is the nucleus. The 26S proteasome is involved in the ATP-dependent degradation of ubiquitinated proteins. The regulatory (or ATPase) complex confers ATP dependency and substrate specificity to the 26S complex. In Oryza sativa subsp. japonica (Rice), this protein is 26S proteasome regulatory subunit 4 homolog (TBP2).